We begin with the raw amino-acid sequence, 1055 residues long: Inactive exonuclease DIS3L2 (1055 aa).

2 disordered regions span residues 1-109 (MKSA…SSPE) and 229-249 (SAAK…KARQ). The span at 17 to 32 (HKKKRNRPQKQNRRSK) shows a compositional bias: basic residues. Positions 39-59 (EDAHVEESLDGRDSSRSKAKD) are enriched in basic and acidic residues. The segment covering 97-108 (PRRSASPLLSSP) has biased composition (low complexity). The region spanning 367–446 (YVQLMPADPR…PQINAILYQN (80 aa)) is the CSD2 domain. An RNB domain is found at 476-824 (RKDLRDLCVL…VHRALAAALE (349 aa)). Mg(2+) is bound by residues D488 and D497.

It belongs to the RNR ribonuclease family. DIS3L2 subfamily.

Its subcellular location is the cytoplasm. In terms of biological role, probable inactive 3'-5'-exoribonuclease. Is unable to complement the growth defect of a yeast mutant lacking RRP44 exonuclease. The chain is Inactive exonuclease DIS3L2 from Arabidopsis thaliana (Mouse-ear cress).